Here is a 290-residue protein sequence, read N- to C-terminus: Nucleoid occlusion protein (290 aa).

The H-T-H motif DNA-binding region spans 153 to 172 (EALAQRLGKGQSTIANKLRL).

This sequence belongs to the ParB family.

It is found in the cytoplasm. It localises to the nucleoid. Functionally, effects nucleoid occlusion by binding relatively nonspecifically to DNA and preventing the assembly of the division machinery in the vicinity of the nucleoid, especially under conditions that disturb the cell cycle. It helps to coordinate cell division and chromosome segregation by preventing the formation of the Z ring through the nucleoid, which would cause chromosome breakage. The sequence is that of Nucleoid occlusion protein from Bacillus cereus (strain AH187).